The sequence spans 220 residues: Probable nicotinate-nucleotide adenylyltransferase (220 aa).

Belongs to the NadD family.

The catalysed reaction is nicotinate beta-D-ribonucleotide + ATP + H(+) = deamido-NAD(+) + diphosphate. It participates in cofactor biosynthesis; NAD(+) biosynthesis; deamido-NAD(+) from nicotinate D-ribonucleotide: step 1/1. In terms of biological role, catalyzes the reversible adenylation of nicotinate mononucleotide (NaMN) to nicotinic acid adenine dinucleotide (NaAD). The sequence is that of Probable nicotinate-nucleotide adenylyltransferase from Yersinia pseudotuberculosis serotype O:1b (strain IP 31758).